We begin with the raw amino-acid sequence, 879 residues long: Band 4.1-like protein 1 (879 aa).

Positions 1-64 (MTTETGPDSE…RPAEQSLDME (64 aa)) are disordered. Residues 17–35 (ETPQQPEAAAAVTTPVTPA) show a composition bias toward low complexity. Phosphothreonine is present on threonine 30. Residues 38–50 (SHPETNSNEKHLT) show a composition bias toward basic and acidic residues. Position 75 is a phosphoserine (serine 75). Threonine 79 is modified (phosphothreonine). The 282-residue stretch at 97–378 (ATCRVTLLDA…EHHTFFRLVS (282 aa)) folds into the FERM domain. Tyrosine 343 carries the post-translational modification Phosphotyrosine. Phosphoserine is present on residues serine 378, serine 430, serine 437, serine 461, and serine 466. The tract at residues 428-501 (SRSLDGAEFS…HKQEFLDKPE (74 aa)) is disordered. Over residues 444–501 (ENHDAGPDGDKREDDAESGGRRSEAEEGEVRTPTKIKELKPEQETTPRHKQEFLDKPE) the composition is skewed to basic and acidic residues. Threonine 475 carries the post-translational modification Phosphothreonine. The interval 483–541 (KPEQETTPRHKQEFLDKPEDVLLKHQASINELKRTLKEPNSKLIHRDRDWERERRLPSS) is spectrin--actin-binding. A Phosphoserine modification is found at serine 510. Positions 514 to 538 (LKRTLKEPNSKLIHRDRDWERERRL) are enriched in basic and acidic residues. Disordered regions lie at residues 514–596 (LKRT…FLKD), 633–687 (FEDF…STPE), and 718–742 (SRVS…MTTP). A phosphoserine mark is found at serine 540, serine 541, serine 544, and serine 546. Threonine 550 bears the Phosphothreonine mark. Positions 550–577 (TPEKASERAGLREGSEEKVKPPRPRAPE) are enriched in basic and acidic residues. Residues serine 564 and serine 578 each carry the phosphoserine modification. Threonine 580 is modified (phosphothreonine). Phosphoserine occurs at positions 583, 587, 639, 648, 650, 665, 666, 669, 671, 677, and 684. Over residues 635 to 650 (DFSRSLPELDRDKSDS) the composition is skewed to basic and acidic residues. Threonine 685 is modified (phosphothreonine). Polar residues predominate over residues 718–728 (SRVSTADSTQV). Phosphoserine occurs at positions 721, 742, 766, 782, and 868. The interval 744-879 (CITTETISTT…EERDKKPQES (136 aa)) is C-terminal (CTD).

Interacts with AGAP2. Highest expression in brain, lower in heart and kidney. Within the brain, highest expression in cerebellum.

Its subcellular location is the cytoplasm. The protein localises to the cytoskeleton. In terms of biological role, may function to confer stability and plasticity to neuronal membrane via multiple interactions, including the spectrin-actin-based cytoskeleton, integral membrane channels and membrane-associated guanylate kinases. The sequence is that of Band 4.1-like protein 1 from Rattus norvegicus (Rat).